A 210-amino-acid chain; its full sequence is Calcium-activated potassium channel subunit beta-4 (210 aa).

Residues 1 to 19 lie on the Cytoplasmic side of the membrane; sequence MAKLRVAYEYTEAEDKSIR. Residues 20-40 traverse the membrane as a helical segment; it reads LGLFLIISGVVSLFIFGFCWL. The Extracellular portion of the chain corresponds to 41-167; the sequence is SPALQDLQAT…DVLLHRTHDE (127 aa). Residues asparagine 53 and asparagine 90 are each glycosylated (N-linked (GlcNAc...) asparagine). Residues 168 to 188 form a helical membrane-spanning segment; it reads IVLLHCFLWPLVTFVVGVLIV. The Cytoplasmic portion of the chain corresponds to 189–210; the sequence is VLTICAKSLAVKAEAMKKRKFS.

This sequence belongs to the KCNMB (TC 8.A.14.1) family. KCNMB4 subfamily. As to quaternary structure, interacts with KCNMA1 tetramer. There are probably 4 molecules of KCMNB4 per KCNMA1 tetramer. Interacts with FMR1 (via N-terminus). Post-translationally, phosphorylated. Phosphorylation modulates its effect on KCNMA1 activation kinetics. In terms of processing, N-glycosylated. A highly glycosylated form is promoted by KCNMA1. Glycosylation, which is not required for the interaction with KCNMA1 and subcellular location, increases protection against charybdotoxin. In terms of tissue distribution, predominantly expressed in brain. In brain, it is expressed in the cerebellum, cerebral cortex, medulla, spinal cord, occipital pole, frontal lobe, temporal lobe, putamen, amygdala, caudate nucleus, corpus callosum, hippocampus, substantia nigra and thalamus. Weakly or not expressed in other tissues.

The protein resides in the membrane. In terms of biological role, regulatory subunit of the calcium activated potassium KCNMA1 (maxiK) channel. Modulates the calcium sensitivity and gating kinetics of KCNMA1, thereby contributing to KCNMA1 channel diversity. Decreases the gating kinetics and calcium sensitivity of the KCNMA1 channel, but with fast deactivation kinetics. May decrease KCNMA1 channel openings at low calcium concentrations but increases channel openings at high calcium concentrations. Makes KCNMA1 channel resistant to 100 nM charybdotoxin (CTX) toxin concentrations. The protein is Calcium-activated potassium channel subunit beta-4 (KCNMB4) of Homo sapiens (Human).